Reading from the N-terminus, the 387-residue chain is Proline-rich protein 5 (387 aa).

Interaction with RICTOR stretches follow at residues 10 to 96 (MSSP…LTKG) and 189 to 219 (HESR…YGLY). The disordered stretch occupies residues 13–34 (PSLSDLGKREPGAAGTDERGTQ). Residues 18–33 (LGKREPGAAGTDERGT) are compositionally biased toward basic and acidic residues. Ser-253 bears the Phosphoserine mark. The interval 262 to 387 (NPVAEHEAEG…EAPGGRPSVV (126 aa)) is disordered. The segment covering 305–314 (SGTFRSSPTP) has biased composition (polar residues). A Phosphoserine modification is found at Ser-373.

Belongs to the PROTOR family. Associated component of the mechanistic target of rapamycin complex 2 (mTORC2). Binds directly to MTOR and RICTOR within the TORC2 complex. As to expression, ubiquitously expressed. Expressed at high levels in kidney.

Functionally, associated subunit of mTORC2, which regulates cell growth and survival in response to hormonal signals. mTORC2 is activated by growth factors, but, in contrast to mTORC1, seems to be nutrient-insensitive. mTORC2 seems to function upstream of Rho GTPases to regulate the actin cytoskeleton, probably by activating one or more Rho-type guanine nucleotide exchange factors. PRR5 plays an important role in regulation of PDGFRB expression and in modulation of platelet-derived growth factor signaling. May act as a tumor suppressor in breast cancer. In Mus musculus (Mouse), this protein is Proline-rich protein 5.